Here is a 429-residue protein sequence, read N- to C-terminus: Adenylosuccinate synthetase (429 aa).

Residues 12-18 and 40-42 each bind GTP; these read GDEGKGK and GHT. Catalysis depends on Asp13, which acts as the Proton acceptor. Positions 13 and 40 each coordinate Mg(2+). Residues 13–16, 38–41, Thr128, Arg142, Gln223, Thr238, and Arg302 each bind IMP; these read DEGK and NAGH. Catalysis depends on His41, which acts as the Proton donor. 298 to 304 is a substrate binding site; sequence TVTKRPR. Residues Arg304, 330 to 332, and 412 to 414 each bind GTP; these read CLD and SVG.

Belongs to the adenylosuccinate synthetase family. As to quaternary structure, homodimer. Mg(2+) is required as a cofactor.

Its subcellular location is the cytoplasm. It carries out the reaction IMP + L-aspartate + GTP = N(6)-(1,2-dicarboxyethyl)-AMP + GDP + phosphate + 2 H(+). It functions in the pathway purine metabolism; AMP biosynthesis via de novo pathway; AMP from IMP: step 1/2. Functionally, plays an important role in the de novo pathway of purine nucleotide biosynthesis. Catalyzes the first committed step in the biosynthesis of AMP from IMP. In Lactiplantibacillus plantarum (strain ATCC BAA-793 / NCIMB 8826 / WCFS1) (Lactobacillus plantarum), this protein is Adenylosuccinate synthetase.